A 316-amino-acid polypeptide reads, in one-letter code: L-lactate dehydrogenase (316 aa).

NAD(+) contacts are provided by residues methionine 14, 14 to 150 (MIGG…IIGL), isoleucine 15, aspartate 35, tyrosine 67, glycine 81, phenylalanine 82, valine 125, asparagine 127, and leucine 150. Arginine 95 is a substrate binding site. 2 residues coordinate substrate: arginine 158 and histidine 182. Residue histidine 182 is the Proton acceptor of the active site.

The protein belongs to the LDH/MDH superfamily. LDH family. Homotetramer.

The catalysed reaction is (S)-lactate + NAD(+) = pyruvate + NADH + H(+). Its pathway is fermentation; pyruvate fermentation to lactate; (S)-lactate from pyruvate: step 1/1. This chain is L-lactate dehydrogenase, found in Plasmodium falciparum (isolate CDC / Honduras).